The following is a 201-amino-acid chain: MGNHLTEMAPTASSFLPHFQALHVVVIGLDSAGKTSLLYRLKFKEFVQSVPTKGFNTEKIRVPLGGSRGITFQVWDVGGQEKLRPLWRSYTRRTDGLVFVVDSAETERLEEARMELHRISKASDNQGVPVLVLANKQDQPGALSAAEVEKRLAVRELAAATLTHVQGCSAVDGLGLQPGLEHLYEMILKRKKAPRSSKKRR.

A lipid anchor (N-myristoyl glycine) is attached at G2. Residues 28–35 (GLDSAGKT), 76–80 (DVGGQ), and 135–138 (NKQD) each bind GTP.

This sequence belongs to the small GTPase superfamily. Arf family. Interacts with CYTH2; the interaction is direct and ARL4D GTP-dependent. Does not interact with ARL4D.

It is found in the nucleus. The protein localises to the nucleolus. It localises to the cell membrane. Its subcellular location is the cytoplasm. Small GTP-binding protein which cycles between an inactive GDP-bound and an active GTP-bound form, and the rate of cycling is regulated by guanine nucleotide exchange factors (GEF) and GTPase-activating proteins (GAP). GTP-binding protein that does not act as an allosteric activator of the cholera toxin catalytic subunit. Recruits CYTH1, CYTH2, CYTH3 and CYTH4 to the plasma membrane in GDP-bound form. The protein is ADP-ribosylation factor-like protein 4D (Arl4d) of Mus musculus (Mouse).